The primary structure comprises 658 residues: Glycogen debranching enzyme (658 aa).

D335 functions as the Nucleophile in the catalytic mechanism. Residue E370 is the Proton donor of the active site. The segment covering 457-468 has biased composition (basic and acidic residues); that stretch reads NDANGEGNRDGT. The segment at 457–478 is disordered; the sequence is NDANGEGNRDGTDSNFSNNHGT.

The protein belongs to the glycosyl hydrolase 13 family.

The enzyme catalyses Hydrolysis of (1-&gt;6)-alpha-D-glucosidic linkages to branches with degrees of polymerization of three or four glucose residues in limit dextrin.. It participates in glycan degradation; glycogen degradation. Functionally, removes maltotriose and maltotetraose chains that are attached by 1,6-alpha-linkage to the limit dextrin main chain, generating a debranched limit dextrin. The chain is Glycogen debranching enzyme from Pectobacterium carotovorum subsp. carotovorum (strain PC1).